The following is a 293-amino-acid chain: 4-hydroxy-tetrahydrodipicolinate synthase (293 aa).

Pyruvate is bound at residue threonine 44. Tyrosine 132 serves as the catalytic Proton donor/acceptor. Lysine 161 serves as the catalytic Schiff-base intermediate with substrate. Isoleucine 203 serves as a coordination point for pyruvate.

This sequence belongs to the DapA family. In terms of assembly, homotetramer; dimer of dimers.

The protein localises to the cytoplasm. The catalysed reaction is L-aspartate 4-semialdehyde + pyruvate = (2S,4S)-4-hydroxy-2,3,4,5-tetrahydrodipicolinate + H2O + H(+). Its pathway is amino-acid biosynthesis; L-lysine biosynthesis via DAP pathway; (S)-tetrahydrodipicolinate from L-aspartate: step 3/4. Functionally, catalyzes the condensation of (S)-aspartate-beta-semialdehyde [(S)-ASA] and pyruvate to 4-hydroxy-tetrahydrodipicolinate (HTPA). This Persephonella marina (strain DSM 14350 / EX-H1) protein is 4-hydroxy-tetrahydrodipicolinate synthase.